The chain runs to 798 residues: Cold shock domain-containing protein E1 (798 aa).

Positions 26–87 constitute a CSD 1 domain; sequence ETGVIEKLLT…RTGKPIAIKL (62 aa). K81 carries the N6-acetyllysine modification. A Glycyl lysine isopeptide (Lys-Gly) (interchain with G-Cter in SUMO2) cross-link involves residue K91. A Phosphoserine modification is found at S123. Residues 136-179 form the CSD 2; truncated domain; that stretch reads VFYLTYTSEDVEGNVQLETGDKINFVIDNNKHTGAVSARNIMLL. The region spanning 186 to 245 is the CSD 3 domain; that stretch reads YQGVVCAMKEAFGFIERGDVVKEIFFHYSEFKGDLETLQPGDDVEFTIKDRNGKEVATDV. A Phosphoserine modification is found at S276. The region spanning 297-337 is the CSD 4; truncated domain; that stretch reads LPFGDKDTKSKVTLLEGDHVRFNISTDRRDKLERATNIEVL. CSD domains lie at 349–410 and 447–507; these read EMGV…AIRI and NKGK…ATCV. Phosphoserine is present on S514. Residues 519 to 579 enclose the CSD 7 domain; the sequence is LLGYVATLKD…KGNKVSAEKV (61 aa). A Phosphoserine modification is found at S584. CSD domains are found at residues 610–670 and 674–735; these read PTQI…AYNI and RRAT…ACNV. In terms of domain architecture, SUZ-C spans 748-789; that stretch reads PRPDRLVNRLKNITLDDASAPRLMVLRQPRGPDNSMGFGAER. A Phosphothreonine modification is found at T761.

It belongs to the UNR family. Component of a multi subunit autoregulatory ribonucleoprotein complex (ARC), at least composed of IGF2BP1, PABPC1 and CSDE1. Interacts with STRAP. Part of a complex associated with the FOS mCRD domain and consisting of PABPC1, PAIP1, HNRPD and SYNCRIP. The interaction with PABPC1 is direct and RNA-independent. Interacts with EIF4ENIF1/4E-T.

It localises to the cytoplasm. It is found in the stress granule. The protein resides in the P-body. Its function is as follows. RNA-binding protein involved in translationally coupled mRNA turnover. Implicated with other RNA-binding proteins in the cytoplasmic deadenylation/translational and decay interplay of the FOS mRNA mediated by the major coding-region determinant of instability (mCRD) domain. Required for efficient formation of stress granules. The polypeptide is Cold shock domain-containing protein E1 (Rattus norvegicus (Rat)).